The sequence spans 228 residues: Deoxyribose-phosphate aldolase (228 aa).

Catalysis depends on aspartate 96, which acts as the Proton donor/acceptor. Lysine 157 (schiff-base intermediate with acetaldehyde) is an active-site residue. Lysine 185 (proton donor/acceptor) is an active-site residue.

Belongs to the DeoC/FbaB aldolase family. DeoC type 1 subfamily.

It localises to the cytoplasm. It catalyses the reaction 2-deoxy-D-ribose 5-phosphate = D-glyceraldehyde 3-phosphate + acetaldehyde. It functions in the pathway carbohydrate degradation; 2-deoxy-D-ribose 1-phosphate degradation; D-glyceraldehyde 3-phosphate and acetaldehyde from 2-deoxy-alpha-D-ribose 1-phosphate: step 2/2. Catalyzes a reversible aldol reaction between acetaldehyde and D-glyceraldehyde 3-phosphate to generate 2-deoxy-D-ribose 5-phosphate. The protein is Deoxyribose-phosphate aldolase of Picosynechococcus sp. (strain ATCC 27264 / PCC 7002 / PR-6) (Agmenellum quadruplicatum).